We begin with the raw amino-acid sequence, 215 residues long: Adenylate kinase (215 aa).

10 to 15 is an ATP binding site; the sequence is GAGKGT. The tract at residues 30–59 is NMP; the sequence is STGDMLRAAVKAGTELGLIAKSVMDSGGLV. AMP is bound by residues Thr31, Arg36, 57 to 59, 85 to 88, and Gln92; these read GLV and GFPR. Residues 122–159 are LID; the sequence is GRRVHEASGRVYHTVYNPPKVEGKDDVTGDDLVQRKDD. Residues Arg123 and 132–133 contribute to the ATP site; that span reads VY. The AMP site is built by Arg156 and Arg167. Gly201 is a binding site for ATP.

The protein belongs to the adenylate kinase family. In terms of assembly, monomer.

The protein localises to the cytoplasm. It carries out the reaction AMP + ATP = 2 ADP. The protein operates within purine metabolism; AMP biosynthesis via salvage pathway; AMP from ADP: step 1/1. Catalyzes the reversible transfer of the terminal phosphate group between ATP and AMP. Plays an important role in cellular energy homeostasis and in adenine nucleotide metabolism. The protein is Adenylate kinase of Pseudomonas fluorescens (strain SBW25).